The chain runs to 278 residues: MSFDVRSEKIDLIKGPELPDYNMFMSQKFTSYEGKLAILLTGNGDCSFYMWILEDAAKHEWSKKAYVVPDFFPLDPFVLLMQRANENDIVRTFHYDDRVGTSDAIVESTPASPPRHIMFSVIIRKDSPLRNLRGAKSIFKVSFTIILKTFIVKLIMMKDFQLDGDMIISKTLSRTDVDHHGRLFLPKNQVLSVLKKMRNVTKESLRKGIELEVVDIIENDSYSVILKSRNTTNDFVLASGWSIMKHSLDLQEGDDIKLFWDYLNYKFIILNFEYNLIP.

Positions 168 to 275 (ISKTLSRTDV…KFIILNFEYN (108 aa)) form a DNA-binding region, TF-B3.

The protein localises to the nucleus. The polypeptide is Putative B3 domain-containing protein At2g21920 (Arabidopsis thaliana (Mouse-ear cress)).